Consider the following 215-residue polypeptide: 3,4-dihydroxy-2-butanone 4-phosphate synthase (215 aa).

D-ribulose 5-phosphate contacts are provided by residues 37–38 (RE), Asp42, 150–154 (RRGHT), and Glu175. Glu38 is a Mg(2+) binding site. Residue His153 coordinates Mg(2+).

Belongs to the DHBP synthase family. As to quaternary structure, homodimer. The cofactor is Mg(2+). It depends on Mn(2+) as a cofactor.

The enzyme catalyses D-ribulose 5-phosphate = (2S)-2-hydroxy-3-oxobutyl phosphate + formate + H(+). It participates in cofactor biosynthesis; riboflavin biosynthesis; 2-hydroxy-3-oxobutyl phosphate from D-ribulose 5-phosphate: step 1/1. Catalyzes the conversion of D-ribulose 5-phosphate to formate and 3,4-dihydroxy-2-butanone 4-phosphate. The polypeptide is 3,4-dihydroxy-2-butanone 4-phosphate synthase (Desulfatibacillum aliphaticivorans).